The following is a 509-amino-acid chain: Probable aspartic-type endopeptidase CTSD (509 aa).

Residues 1–21 form the signal peptide; that stretch reads MQFLWLCLLSAVTLQFTGTLA. A Peptidase A1 domain is found at 102-408; the sequence is YFSEVKVGSE…DFDKNRVGLA (307 aa). The active site involves Asp120. Residue Asn174 is glycosylated (N-linked (GlcNAc...) asparagine). Residue Asp302 is part of the active site. The N-linked (GlcNAc...) asparagine glycan is linked to Asn361. The tract at residues 451 to 489 is disordered; the sequence is NKAPSGGSPGLPAESGSDSTTNGEATNGATSSPNSSSSV. Residues 466-480 show a composition bias toward polar residues; sequence GSDSTTNGEATNGAT. An N-linked (GlcNAc...) asparagine glycan is attached at Asn484. Residue Ser485 is the site of GPI-anchor amidated serine attachment. Positions 486–509 are cleaved as a propeptide — removed in mature form; that stretch reads SSSVLTPTWLTLAVFFAIGSSLWS.

The protein belongs to the peptidase A1 family.

The protein localises to the cell membrane. In terms of biological role, probable GPI-anchored aspartic-type endopeptidase which contributes to virulence. The chain is Probable aspartic-type endopeptidase CTSD (CTSD) from Trichophyton verrucosum (strain HKI 0517).